The sequence spans 238 residues: 1-(5-phosphoribosyl)-5-[(5-phosphoribosylamino)methylideneamino] imidazole-4-carboxamide isomerase (238 aa).

Asp8 acts as the Proton acceptor in catalysis. Asp129 acts as the Proton donor in catalysis.

This sequence belongs to the HisA/HisF family.

Its subcellular location is the cytoplasm. It carries out the reaction 1-(5-phospho-beta-D-ribosyl)-5-[(5-phospho-beta-D-ribosylamino)methylideneamino]imidazole-4-carboxamide = 5-[(5-phospho-1-deoxy-D-ribulos-1-ylimino)methylamino]-1-(5-phospho-beta-D-ribosyl)imidazole-4-carboxamide. Its pathway is amino-acid biosynthesis; L-histidine biosynthesis; L-histidine from 5-phospho-alpha-D-ribose 1-diphosphate: step 4/9. The sequence is that of 1-(5-phosphoribosyl)-5-[(5-phosphoribosylamino)methylideneamino] imidazole-4-carboxamide isomerase from Jannaschia sp. (strain CCS1).